Here is a 316-residue protein sequence, read N- to C-terminus: Olfactory receptor 5P79 (316 aa).

Residues 1-28 (MGILKDGNHTAVTEFILLGLTDDPVLKV) are Extracellular-facing. Residue N8 is glycosylated (N-linked (GlcNAc...) asparagine). The helical transmembrane segment at 29 to 49 (VLFTIILCIYLVTVSGNLSTI) threads the bilayer. The Cytoplasmic segment spans residues 50-57 (LLIRVSSQ). Residues 58 to 78 (LHHPMYFFLSHLASVDIGISS) form a helical membrane-spanning segment. Over 79-102 (SVTPNMLVNFLLERSTISYLGCGI) the chain is Extracellular. The cysteines at positions 100 and 192 are disulfide-linked. The helical transmembrane segment at 103 to 123 (QLGSGAFFGSTESFLLAAMAY) threads the bilayer. Over 124–136 (DHFMAICNPLLYS) the chain is Cytoplasmic. Residues 137-157 (TKMSTQVCIQLLVGSYIGGFL) traverse the membrane as a helical segment. Topologically, residues 158-199 (NASSFILSFFSFLFCGPNKVNHFFCDFTPLVELSCSDNSVLL) are extracellular. A helical transmembrane segment spans residues 200 to 220 (ILDSFSAGSIIVITVLVIAIS). Residues 221-240 (YTYILITILKMHSTEGRHKA) lie on the Cytoplasmic side of the membrane. The chain crosses the membrane as a helical span at residues 241-261 (FSTCTSHLTAVTVFYGTVTFI). At 262–274 (YVMPKSSYSTDQN) the chain is on the extracellular side. Residues 275–297 (KVLSVFYMIAIAIPMLNPLIYSL) form a helical membrane-spanning segment. Residues 298 to 316 (RNNEIKNALKRQLSKKTFS) are Cytoplasmic-facing.

The protein belongs to the G-protein coupled receptor 1 family.

Its subcellular location is the cell membrane. In terms of biological role, potential odorant receptor. The chain is Olfactory receptor 5P79 from Mus musculus (Mouse).